The primary structure comprises 118 residues: Non-specific lipid-transfer protein A (118 aa).

Positions Met-1–Arg-25 are cleaved as a signal peptide. 4 cysteine pairs are disulfide-bonded: Cys-29-Cys-76, Cys-39-Cys-53, Cys-54-Cys-100, and Cys-74-Cys-114.

Belongs to the plant LTP family.

Functionally, plant non-specific lipid-transfer proteins transfer phospholipids as well as galactolipids across membranes. May play a role in wax or cutin deposition in the cell walls of expanding epidermal cells and certain secretory tissues. This is Non-specific lipid-transfer protein A (WAX9A) from Brassica oleracea var. italica (Broccoli).